Here is a 962-residue protein sequence, read N- to C-terminus: Splicing regulator ARVCF (962 aa).

Residues 8-46 (SAASILASVKEQEARFERLTRALEQERRHVALQLERAQQ) are a coiled coil. A disordered region spans residues 95 to 122 (TVEEDPGTPTSHVSIVTSEDGTTRRTET). Phosphothreonine occurs at positions 102 and 104. Over residues 102-114 (TPTSHVSIVTSED) the composition is skewed to polar residues. R170 carries the omega-N-methylarginine modification. 2 disordered regions span residues 186–253 (GGGF…LPER) and 266–290 (RSLAADDEGGPELEPDYGTATRRRP). Low complexity predominate over residues 206 to 217 (RGLGMRPPRAGP). A Phosphoserine modification is found at S267. Positions 270–280 (ADDEGGPELEP) are enriched in acidic residues. Phosphoserine is present on residues S332, S335, S343, and S345. ARM repeat units lie at residues 348–387 (SARKEPRWRDPELPEVLAMLRHPVDPVKANAAAYLQHLCF), 390–429 (EGVKRRVRQLRGLPLLVALLDHPRAEVRRRACGALRNLSY), 433–467 (TDNKAAIRDCGGVPALVRLLRAARDNEVRELVTGT), 468–508 (LWNL…NEDS), 526–565 (LRNVSSDGAEARRRLRECEGLVDALLHALQSAVGRKDTDN), and 575–622 (MRNL…GKKA). Residues 590–614 (DRYQEAEPGPLGSAVGSQRRRRDDA) are disordered. S606 is subject to Phosphoserine. The Nuclear localization signal motif lies at 607–623 (QRRRRDDASCFGGKKAK). T642 carries the post-translational modification Phosphothreonine. ARM repeat units follow at residues 646 to 686 (PKRT…AAGA), 699 to 738 (TYIRATVRKERGLPVLVELLQSETDKVVRAVAIALRNLSL), 739 to 781 (DRRN…AVLN), and 782 to 826 (TIHE…SHVL). The interval 776–962 (VVAVLNTIHE…AKPQPVDSWV (187 aa)) is required for interaction with RNA-binding proteins DDX5, HNRNPH2 and SRSF1 and with mRNAs. Residues 854-962 (ATAKGPKGAL…AKPQPVDSWV (109 aa)) form a disordered region. S864 and S871 each carry phosphoserine. Residue T872 is modified to Phosphothreonine. A compositionally biased stretch (basic and acidic residues) spans 878–887 (KSLEGEKTGS). S915 is subject to Phosphoserine. The span at 920–932 (ASEKEPLKLDPSR) shows a compositional bias: basic and acidic residues.

This sequence belongs to the beta-catenin family. As to quaternary structure, component of a ribonucleoprotein complex containing mRNAs and RNA-binding proteins including DDX5, HNRNPH2 and SRSF1 as well as ARVCF. Interacts (via the extreme C-terminus) with FRMPD2 (via the PDZ 2 domain). Interacts with CCDC85B. Found in all the examined tissues including heart, brain, liver and kidney. Found at low level in lung. Expressed in dermal connective tissue, salivary gland duct and in the corneal layer (at protein level). Expressed in arrector pili muscle (at protein level). High levels detected in epithelial cells with lower levels found in fibroblasts and T lymphocytes.

The protein localises to the cell junction. It is found in the adherens junction. It localises to the nucleus. The protein resides in the cytoplasm. Contributes to the regulation of alternative splicing of pre-mRNAs. This chain is Splicing regulator ARVCF, found in Homo sapiens (Human).